We begin with the raw amino-acid sequence, 475 residues long: Membrane-bound lytic murein transglycosylase F (475 aa).

The first 30 residues, 1-30, serve as a signal peptide directing secretion; the sequence is MKKLKINYLFIGILTLLLAAALWPSIPWFG. The segment at 31–269 is non-LT domain; it reads KTENHIAAIQ…RIEEKYLGHG (239 aa). The tract at residues 270–475 is LT domain; the sequence is DDFDYVDTRS…MKLAQDYPAV (206 aa). The active site involves Glu314.

This sequence in the N-terminal section; belongs to the bacterial solute-binding protein 3 family. In the C-terminal section; belongs to the transglycosylase Slt family.

It is found in the cell outer membrane. The catalysed reaction is Exolytic cleavage of the (1-&gt;4)-beta-glycosidic linkage between N-acetylmuramic acid (MurNAc) and N-acetylglucosamine (GlcNAc) residues in peptidoglycan, from either the reducing or the non-reducing ends of the peptidoglycan chains, with concomitant formation of a 1,6-anhydrobond in the MurNAc residue.. Functionally, murein-degrading enzyme that degrades murein glycan strands and insoluble, high-molecular weight murein sacculi, with the concomitant formation of a 1,6-anhydromuramoyl product. Lytic transglycosylases (LTs) play an integral role in the metabolism of the peptidoglycan (PG) sacculus. Their lytic action creates space within the PG sacculus to allow for its expansion as well as for the insertion of various structures such as secretion systems and flagella. This Salmonella typhi protein is Membrane-bound lytic murein transglycosylase F.